A 111-amino-acid chain; its full sequence is Pyrimidine/purine nucleoside phosphorylase 1 (111 aa).

Belongs to the nucleoside phosphorylase PpnP family.

It carries out the reaction a purine D-ribonucleoside + phosphate = a purine nucleobase + alpha-D-ribose 1-phosphate. The catalysed reaction is adenosine + phosphate = alpha-D-ribose 1-phosphate + adenine. The enzyme catalyses cytidine + phosphate = cytosine + alpha-D-ribose 1-phosphate. It catalyses the reaction guanosine + phosphate = alpha-D-ribose 1-phosphate + guanine. It carries out the reaction inosine + phosphate = alpha-D-ribose 1-phosphate + hypoxanthine. The catalysed reaction is thymidine + phosphate = 2-deoxy-alpha-D-ribose 1-phosphate + thymine. The enzyme catalyses uridine + phosphate = alpha-D-ribose 1-phosphate + uracil. It catalyses the reaction xanthosine + phosphate = alpha-D-ribose 1-phosphate + xanthine. Catalyzes the phosphorolysis of diverse nucleosides, yielding D-ribose 1-phosphate and the respective free bases. Can use uridine, adenosine, guanosine, cytidine, thymidine, inosine and xanthosine as substrates. Also catalyzes the reverse reactions. In Psychrobacter cryohalolentis (strain ATCC BAA-1226 / DSM 17306 / VKM B-2378 / K5), this protein is Pyrimidine/purine nucleoside phosphorylase 1.